The primary structure comprises 193 residues: Bcl-2-binding component 3, isoforms 1/2 (193 aa).

2 disordered regions span residues Met-1–Gly-28 and Ala-71–Gly-138. Ser-10 is modified (phosphoserine). Residues Ala-71 to Arg-82 show a composition bias toward low complexity. Positions Ile-137–Gln-151 match the BH3 motif.

This sequence belongs to the Bcl-2 family. Interacts with MCL1 and BCL2A1. Interacts (via BH3 domain) with BCL2. Interacts with BCL2L1/BCL-XL. Interacts (via BH3 domain) with NOL3/ARC (via CARD domain); this interaction prevents BBC3 association with BCL2 and results in CASP8 activation. As to expression, ubiquitously expressed.

The protein localises to the mitochondrion. Functionally, essential mediator of p53/TP53-dependent and p53/TP53-independent apoptosis. Promotes partial unfolding of BCL2L1 and dissociation of BCL2L1 from p53/TP53, releasing the bound p53/TP53 to induce apoptosis. Regulates ER stress-induced neuronal apoptosis. The chain is Bcl-2-binding component 3, isoforms 1/2 (BBC3) from Homo sapiens (Human).